The following is a 203-amino-acid chain: Glycerol-3-phosphate acyltransferase (203 aa).

The next 4 helical transmembrane spans lie at 4-24, 68-88, 104-124, and 125-145; these read LTFA…AVLI, IPVY…FIGI, GGKG…DMGS, and FMIV…LAAI.

Belongs to the PlsY family. In terms of assembly, probably interacts with PlsX.

It is found in the cell inner membrane. The catalysed reaction is an acyl phosphate + sn-glycerol 3-phosphate = a 1-acyl-sn-glycero-3-phosphate + phosphate. It functions in the pathway lipid metabolism; phospholipid metabolism. In terms of biological role, catalyzes the transfer of an acyl group from acyl-phosphate (acyl-PO(4)) to glycerol-3-phosphate (G3P) to form lysophosphatidic acid (LPA). This enzyme utilizes acyl-phosphate as fatty acyl donor, but not acyl-CoA or acyl-ACP. This chain is Glycerol-3-phosphate acyltransferase, found in Tolumonas auensis (strain DSM 9187 / NBRC 110442 / TA 4).